Reading from the N-terminus, the 289-residue chain is Cysteine-rich venom protein Mr30 (289 aa).

Residues 1–24 (MLSTMQTVGAILMLSIVFVAGTKR) form the signal peptide. The residue at position 33 (glutamate 33) is a 4-carboxyglutamate. Positions 62-184 (VRMHNVIRAT…GEDRYFVCNY (123 aa)) constitute an SCP domain.

The protein belongs to the CRISP family. Contains 11 disulfide bonds. As to expression, expressed by the venom duct.

The protein resides in the secreted. Has no proteolytic activity. This is Cysteine-rich venom protein Mr30 from Conus marmoreus (Marble cone).